Reading from the N-terminus, the 272-residue chain is MKRSAFFISDGTGITAETLGQSLLAQFENVTFSKFTRPYIDSMEKARAMVQQINIAAEKDGHRPIIFDTIVNQDIREILATSNGFMIDIFSTFLAPLEQELSEHSSYSVGKSHSIGHNSNYMERIEAVNFALDNDDGARTHYYDKADLILVGVSRCGKTPTCLYMAMQFGIRAANYPLTEEDMERLQLPNALRAHKHKLFGLTIDPDRLTAIRNERKPNSRYSSYAQCEFEVREVENLFRRENIPHINSTHFSVEEISAKILVEKGVERRFK.

152 to 159 (GVSRCGKT) contacts ADP.

The protein belongs to the pyruvate, phosphate/water dikinase regulatory protein family. PSRP subfamily.

The enzyme catalyses [pyruvate, water dikinase] + ADP = [pyruvate, water dikinase]-phosphate + AMP + H(+). The catalysed reaction is [pyruvate, water dikinase]-phosphate + phosphate + H(+) = [pyruvate, water dikinase] + diphosphate. In terms of biological role, bifunctional serine/threonine kinase and phosphorylase involved in the regulation of the phosphoenolpyruvate synthase (PEPS) by catalyzing its phosphorylation/dephosphorylation. The chain is Putative phosphoenolpyruvate synthase regulatory protein from Pseudomonas fluorescens (strain ATCC BAA-477 / NRRL B-23932 / Pf-5).